An 88-amino-acid chain; its full sequence is UPF0297 protein Bcer98_3100 (88 aa).

It belongs to the UPF0297 family.

In Bacillus cytotoxicus (strain DSM 22905 / CIP 110041 / 391-98 / NVH 391-98), this protein is UPF0297 protein Bcer98_3100.